A 172-amino-acid chain; its full sequence is Large ribosomal subunit protein uL10 (172 aa).

Belongs to the universal ribosomal protein uL10 family. As to quaternary structure, part of the ribosomal stalk of the 50S ribosomal subunit. The N-terminus interacts with L11 and the large rRNA to form the base of the stalk. The C-terminus forms an elongated spine to which L12 dimers bind in a sequential fashion forming a multimeric L10(L12)X complex.

Forms part of the ribosomal stalk, playing a central role in the interaction of the ribosome with GTP-bound translation factors. The polypeptide is Large ribosomal subunit protein uL10 (Ruegeria sp. (strain TM1040) (Silicibacter sp.)).